A 458-amino-acid polypeptide reads, in one-letter code: tRNA modification GTPase MnmE (458 aa).

3 residues coordinate (6S)-5-formyl-5,6,7,8-tetrahydrofolate: R26, E88, and R127. A TrmE-type G domain is found at 224 to 378; that stretch reads GLSTAIIGRP…IEDRINQLFF (155 aa). Position 234 (N234) interacts with K(+). GTP contacts are provided by residues 234–239, 253–259, and 278–281; these read NVGKSS, TDIAGTT, and DTAG. S238 is a binding site for Mg(2+). Residues T253, I255, and T258 each contribute to the K(+) site. T259 lines the Mg(2+) pocket. K458 is a (6S)-5-formyl-5,6,7,8-tetrahydrofolate binding site.

The protein belongs to the TRAFAC class TrmE-Era-EngA-EngB-Septin-like GTPase superfamily. TrmE GTPase family. As to quaternary structure, homodimer. Heterotetramer of two MnmE and two MnmG subunits. Requires K(+) as cofactor.

The protein localises to the cytoplasm. Exhibits a very high intrinsic GTPase hydrolysis rate. Involved in the addition of a carboxymethylaminomethyl (cmnm) group at the wobble position (U34) of certain tRNAs, forming tRNA-cmnm(5)s(2)U34. This Streptococcus pyogenes serotype M5 (strain Manfredo) protein is tRNA modification GTPase MnmE.